Consider the following 33-residue polypeptide: rho operon leader peptide (33 aa).

A compositionally biased stretch (polar residues) spans 1-25 (MRSEQISGSSLNPSCRFSSAYSPVT). A disordered region spans residues 1–33 (MRSEQISGSSLNPSCRFSSAYSPVTRQRKDMSR).

This Escherichia coli O157:H7 protein is rho operon leader peptide (rhoL).